The primary structure comprises 130 residues: ESAT-6 secretion system extracellular protein C (130 aa).

Belongs to the EsxC family.

It localises to the secreted. The sequence is that of ESAT-6 secretion system extracellular protein C from Staphylococcus aureus (strain MSSA476).